The primary structure comprises 57 residues: MTTVTQMKCACPHCLCIVSLNDAIMVDGKPYCSEVCANGTCKENSGCGHAGCGCGSA.

This sequence belongs to the metallothionein superfamily. Type 14 family.

Functionally, this protein complexes cadmium, zinc and copper. The polypeptide is Metallothionein (mtnA) (Thermostichus vulcanus (Synechococcus vulcanus)).